The following is a 419-amino-acid chain: Putative zinc metalloprotease spyM18_2031 (419 aa).

Histidine 18 is a Zn(2+) binding site. The active site involves glutamate 19. Position 22 (histidine 22) interacts with Zn(2+). 4 helical membrane-spanning segments follow: residues 169-191, 301-323, 343-365, and 392-411; these read LITN…ILLV, LAWS…FSLN, LESV…LIPI, and AYIT…AVTW. Positions 175–274 constitute a PDZ domain; that stretch reads GPMNNFILGI…LKTVAVKPQK (100 aa).

This sequence belongs to the peptidase M50B family. Zn(2+) serves as cofactor.

It is found in the cell membrane. The polypeptide is Putative zinc metalloprotease spyM18_2031 (Streptococcus pyogenes serotype M18 (strain MGAS8232)).